Here is a 241-residue protein sequence, read N- to C-terminus: Eukaryotic translation initiation factor 3 subunit J (241 aa).

Over residues 1–27 the composition is skewed to basic and acidic residues; sequence MEEDWEQHGEKEEVPLPAKKPDANKWD. Residues 1 to 99 form a disordered region; sequence MEEDWEQHGE…ENMTPEQKLA (99 aa). A compositionally biased stretch (acidic residues) spans 28-45; the sequence is GEDEEEEVKDSWEDEDEL. A coiled-coil region spans residues 31–119; the sequence is EEEEVKDSWE…ESDLKNALDT (89 aa). Composition is skewed to basic and acidic residues over residues 46 to 58 and 69 to 90; these read EEKK…ETPK and IVEK…KEAE.

It belongs to the eIF-3 subunit J family. In terms of assembly, component of the eukaryotic translation initiation factor 3 (eIF-3) complex.

The protein resides in the cytoplasm. Component of the eukaryotic translation initiation factor 3 (eIF-3) complex, which is involved in protein synthesis of a specialized repertoire of mRNAs and, together with other initiation factors, stimulates binding of mRNA and methionyl-tRNAi to the 40S ribosome. The eIF-3 complex specifically targets and initiates translation of a subset of mRNAs involved in cell proliferation. In Culex quinquefasciatus (Southern house mosquito), this protein is Eukaryotic translation initiation factor 3 subunit J.